A 653-amino-acid polypeptide reads, in one-letter code: Chaperone protein DnaK (653 aa).

T200 bears the Phosphothreonine; by autocatalysis mark. A disordered region spans residues 615 to 653 (AEAAAAGAAGAGGAGASAGGASQQQDDVVDAEFKEVKKD). Residues 623-632 (AGAGGAGASA) show a composition bias toward gly residues.

This sequence belongs to the heat shock protein 70 family.

Acts as a chaperone. In Paraburkholderia xenovorans (strain LB400), this protein is Chaperone protein DnaK.